The sequence spans 247 residues: Granzyme B(G,H) (247 aa).

Positions 1–18 (MKILLLLLTLSLASRTKA) are cleaved as a signal peptide. The propeptide at 19 to 20 (GE) is activation peptide. The 225-residue stretch at 21-245 (IIGGHEVKPH…FLSWIKKTMK (225 aa)) folds into the Peptidase S1 domain. Cysteines 49 and 65 form a disulfide. The active-site Charge relay system is the H64. N-linked (GlcNAc...) asparagine glycosylation is present at N71. D108 acts as the Charge relay system in catalysis. 2 cysteine pairs are disulfide-bonded: C142/C209 and C173/C188. N182 carries N-linked (GlcNAc...) asparagine glycosylation. The Charge relay system role is filled by S203.

The protein belongs to the peptidase S1 family. Granzyme subfamily.

Its subcellular location is the secreted. It localises to the cytolytic granule. It carries out the reaction Preferential cleavage: -Asp-|-Xaa- &gt;&gt; -Asn-|-Xaa- &gt; -Met-|-Xaa-, -Ser-|-Xaa-.. Inactivated by the serine protease inhibitor diisopropylfluorophosphate. In terms of biological role, abundant protease in the cytosolic granules of cytotoxic T-cells and NK-cells which activates caspase-independent pyroptosis when delivered into the target cell through the immunological synapse. It cleaves after Asp. Once delivered into the target cell, acts by catalyzing cleavage of gasdermin-E (GSDME), releasing the pore-forming moiety of GSDME, thereby triggering pyroptosis and target cell death. Seems to be linked to an activation cascade of caspases (aspartate-specific cysteine proteases) responsible for apoptosis execution. Cleaves caspase-3 and -9 (CASP3 and CASP9, respectively) to give rise to active enzymes mediating apoptosis. Cleaves and activates CASP7 in response to bacterial infection, promoting plasma membrane repair. This is Granzyme B(G,H) (Gzmb) from Mus musculus (Mouse).